The chain runs to 2217 residues: Protein irg-7 (2217 aa).

An N-terminal signal peptide occupies residues 1–16 (MRNWVLIAALAVICLA). EGF-like domains follow at residues 370–405 (SGST…FHCQ) and 864–896 (TGTY…ESCE). 8 cysteine pairs are disulfide-bonded: Cys-379–Cys-393, Cys-395–Cys-404, Cys-868–Cys-873, Cys-886–Cys-895, Cys-1212–Cys-1312, Cys-1285–Cys-1304, Cys-1508–Cys-1521, and Cys-1523–Cys-1532. Residues 1188–1313 (IGQYCIKFMA…CAEPRAFACQ (126 aa)) enclose the C-type lectin domain. An EGF-like 3 domain is found at 1499-1533 (TGSRCTVPICVNGGTRNPDEATCSCPDGYEGPNCQ). A VWFA domain is found at 2016–2202 (DVVFMIDGSQ…NNQIKTIQQL (187 aa)).

Its subcellular location is the secreted. Functionally, plays a role in innate immunity, probably via the atf-7 pathway, to confer resistance to pathogenic bacteria. May also play a role in the regulation of longevity. The sequence is that of Protein irg-7 from Caenorhabditis elegans.